The chain runs to 284 residues: Tropomyosin Pen a 1.0102 (284 aa).

A disordered region spans residues 1-51 (MDAIKKKMQAMKLEKDNAMDRADTLEQQNKEANNRAEKSEEEVHNLQKRMQ). Residues 1-273 (MDAIKKKMQA…KEKYKSITDE (273 aa)) adopt a coiled-coil conformation. Residues 12-45 (KLEKDNAMDRADTLEQQNKEANNRAEKSEEEVHN) are compositionally biased toward basic and acidic residues. IgE-binding regions lie at residues 43-57 (VHNL…ENDL), 85-105 (VAAL…SEER), 133-153 (RSLS…EARF), 187-202 (ESKI…VVGN), 247-284 (QKLQ…LSGY), 249-260 (LQKEVDRLEDEL), and 266-281 (KYKS…FSEL).

Belongs to the tropomyosin family. Homodimer.

Tropomyosin, in association with the troponin complex, plays a central role in the calcium dependent regulation of muscle contraction. The protein is Tropomyosin Pen a 1.0102 of Penaeus aztecus (Brown shrimp).